The following is a 231-amino-acid chain: Histidine biosynthesis bifunctional protein HisIE (231 aa).

The tract at residues 1-130 (MQDVFRQIDW…QKYPIGVYHI (130 aa)) is phosphoribosyl-AMP cyclohydrolase. Residues 131–231 (LDDLYHIIEQ…GIEEKASRKH (101 aa)) form a phosphoribosyl-ATP pyrophosphohydrolase region.

This sequence in the N-terminal section; belongs to the PRA-CH family. In the C-terminal section; belongs to the PRA-PH family.

The protein resides in the cytoplasm. The enzyme catalyses 1-(5-phospho-beta-D-ribosyl)-ATP + H2O = 1-(5-phospho-beta-D-ribosyl)-5'-AMP + diphosphate + H(+). It carries out the reaction 1-(5-phospho-beta-D-ribosyl)-5'-AMP + H2O = 1-(5-phospho-beta-D-ribosyl)-5-[(5-phospho-beta-D-ribosylamino)methylideneamino]imidazole-4-carboxamide. Its pathway is amino-acid biosynthesis; L-histidine biosynthesis; L-histidine from 5-phospho-alpha-D-ribose 1-diphosphate: step 2/9. The protein operates within amino-acid biosynthesis; L-histidine biosynthesis; L-histidine from 5-phospho-alpha-D-ribose 1-diphosphate: step 3/9. This chain is Histidine biosynthesis bifunctional protein HisIE, found in Helicobacter hepaticus (strain ATCC 51449 / 3B1).